A 275-amino-acid chain; its full sequence is Echotoxin-2 (275 aa).

An N-terminal signal peptide occupies residues 1–23; sequence MKRNILALVVVVALISQSRPAES. A plays an important role in the hemolytic activity region spans residues 23 to 32; sequence SAGGTIIATL. The segment at 49 to 67 is N-terminal region; that stretch reads ETGASVASAAAAATSSDYS. Phosphocholine is bound by residues Gly123, Ser141, Pro143, Tyr176, and Tyr177. The segment at 141 to 156 is trp-rich region, which is important for the binding to lipid membrane; it reads SAPYNFDFYSNWLAVG. A propeptide spanning residues 249–275 is cleaved from the precursor; that stretch reads RAIQQELARRAEEEKQRKRKALDEMLK.

This sequence belongs to the actinoporin family. Sea anemone subfamily. Octamer or nonamer in membranes. Monomer in the soluble state. Salivary gland.

The protein localises to the secreted. Its subcellular location is the nematocyst. It is found in the target cell membrane. Its function is as follows. Pore-forming protein that forms cations-selective hydrophilic pores of around 1 nm and causes cardiac stimulation and cytolysis. Pore formation is a multi-step process that involves specific recognition of membrane sphingomyelin (but neither cholesterol nor phosphatidylcholine) using aromatic rich region and adjacent phosphocholine (POC) binding site, firm binding to the membrane (mainly driven by hydrophobic interactions) accompanied by the transfer of the N-terminal region to the lipid-water interface and finally pore formation after oligomerization of monomers. Exhibits both hemolytic and lethal activities. Gangliosides potently inhibits the hemolytic activity. In Monoplex parthenopeus (Giant triton), this protein is Echotoxin-2.